The chain runs to 119 residues: MSSSATSTQAFSLKTRQPIPDEDALLTEEDRILKQATKGEDCTTRRRACKNCVCGRAELERKLEAEGKLEAEALAMPPGGCGNCSKGDAFRCANCPFLGQPAFDATEDGKVKLNLTDDV.

Residues methionine 1–threonine 15 are compositionally biased toward polar residues. 2 disordered regions span residues methionine 1–aspartate 21 and leucine 33–valine 119. Cysteine 42, cysteine 49, cysteine 52, and cysteine 54 together coordinate [2Fe-2S] cluster. The segment at cysteine 42–cysteine 54 is fe-S binding site A. 4 residues coordinate [4Fe-4S] cluster: cysteine 81, cysteine 84, cysteine 92, and cysteine 95. 2 short sequence motifs (cx2C motif) span residues cysteine 81–cysteine 84 and cysteine 92–cysteine 95. The interval cysteine 81–cysteine 95 is fe-S binding site B.

This sequence belongs to the anamorsin family. As to quaternary structure, monomer. It depends on [2Fe-2S] cluster as a cofactor. The cofactor is [4Fe-4S] cluster.

Its subcellular location is the cytoplasm. The protein localises to the mitochondrion intermembrane space. Its function is as follows. Component of the cytosolic iron-sulfur (Fe-S) protein assembly (CIA) machinery. Required for the maturation of extramitochondrial Fe-S proteins. Part of an electron transfer chain functioning in an early step of cytosolic Fe-S biogenesis, facilitating the de novo assembly of a [4Fe-4S] cluster on the cytosolic Fe-S scaffold complex. Electrons are transferred from NADPH via a FAD- and FMN-containing diflavin oxidoreductase. Together with the diflavin oxidoreductase, also required for the assembly of the diferric tyrosyl radical cofactor of ribonucleotide reductase (RNR), probably by providing electrons for reduction during radical cofactor maturation in the catalytic small subunit. The sequence is that of Anamorsin homolog from Leishmania infantum.